The chain runs to 358 residues: CCAAT/enhancer-binding protein alpha (358 aa).

The disordered stretch occupies residues 1–55; the sequence is MESADFYEAEPRPPMSSHLQSPPHAPSSAAFGFPRGAGPAQPPAPPAAPEPLGGI. Positions 1 to 70 are required to repress E2F1:TFDP1-mediated transcription, to inhibit cell cycle and to induce adipocyte differentiation; it reads MESADFYEAE…SIDISAYIDP (70 aa). Positions 29 to 39 are enriched in low complexity; sequence AAFGFPRGAGP. Residues 40 to 49 show a composition bias toward pro residues; it reads AQPPAPPAAP. Positions 54 to 72 are required for interaction with TRIB1; that stretch reads GICEHETSIDISAYIDPAA. The segment at 128–204 is required to induce adipocyte differentiation; the sequence is PPGYGCAAAG…HPPPAHLAAP (77 aa). Residue K161 is modified to N6-acetyllysine; alternate. Residue K161 forms a Glycyl lysine isopeptide (Lys-Gly) (interchain with G-Cter in SUMO2); alternate linkage. 2 disordered regions span residues 178 to 201 and 217 to 291; these read LFPYQPPPPPPPSHPHPHPPPAHL and TMHL…RRER. Composition is skewed to pro residues over residues 181–199 and 224–238; these read YQPPPPPPPSHPHPHPPPA and HPTPPPTPVPSPHPA. The segment at 182-198 is required to functionally cooperate with SREBF1 in promoter activation; sequence QPPPPPPPSHPHPHPPP. S190 bears the Phosphoserine mark. Phosphothreonine; by GSK3 occurs at positions 226 and 230. A Phosphoserine; by GSK3 modification is found at S234. Residues 239–259 show a composition bias toward low complexity; that stretch reads PALGAAGLPGPGSALKGLGAA. Residues 244 to 358 form an interaction with FOXO1 region; sequence AGLPGPGSAL…SLVKAMGNCA (115 aa). Residues 276-291 show a composition bias toward basic and acidic residues; it reads KSVDKNSNEYRVRRER. A bZIP domain is found at 282–345; sequence SNEYRVRRER…DTLRGIFRQL (64 aa). A DNA-binding region spans residues 285 to 300; it reads YRVRRERNNIAVRKSR. A basic motif region spans residues 286–313; it reads RVRRERNNIAVRKSRDKAKQRNVETQQK. Positions 317 to 345 are leucine-zipper; that stretch reads LTSDNDRLRKRVEQLSRELDTLRGIFRQL.

This sequence belongs to the bZIP family. C/EBP subfamily. Binds DNA as a homodimer and as a heterodimer. Can form stable heterodimers with CEBPB, CEBPD, CEBPE and CEBPG. Interacts with PRDM16. Interacts with UBN1. Interacts with ZNF638; this interaction increases transcriptional activation. Interacts with the complex TFDP2:E2F1; the interaction prevents CEBPA binding to target gene promoters and represses its transcriptional activity. Interacts with RB1. Interacts (when phosphorylated at Ser-190) with CDK2, CDK4, E2F4 and SMARCA2. Interacts with SREBPF1. Interacts with FOXO1 (via the Fork-head domain); the interaction increases when FOXO1 is deacetylated. Interacts with SIX1. Interacts (via recognition sequence) with TRIB1. Interacts (via bZIP domain) with OVOL2 (via zinc-finger domains); the interaction inhibits the transcription factor activity of CEBPA and is required to repress adipogenesis. In terms of assembly, interacts with TAF1A and UBTF. As to quaternary structure, interacts with TAF1A and UBTF. Interacts with NPM1. (Microbial infection) Interacts with HBV protein X. In terms of assembly, (Microbial infection) Interacts with Epstein-Barr virus lytic switch protein BZLF1; this interaction induces G1 cell cycle arrest. In terms of processing, phosphorylation at Ser-190 is required for interaction with CDK2, CDK4 and SWI/SNF complex leading to cell cycle inhibition. Dephosphorylated at Ser-190 by protein phosphatase 2A (PP2A) through PI3K/AKT signaling pathway regulation. Phosphorylation at Thr-226 and Thr-230 by GSK3 is constitutive in adipose tissue and lung. In liver, both Thr-226 and Thr-230 are phosphorylated only during feeding but not during fasting. Phosphorylation of the GSK3 consensus sites selectively decreases transactivation activity on IRE-controlled promoters. Post-translationally, sumoylated, sumoylation blocks the inhibitory effect on cell proliferation by disrupting the interaction with SMARCA2. Ubiquitinated by COP1 upon interaction with TRIB1.

It is found in the nucleus. Its subcellular location is the nucleolus. Functionally, transcription factor that coordinates proliferation arrest and the differentiation of myeloid progenitors, adipocytes, hepatocytes, and cells of the lung and the placenta. Binds directly to the consensus DNA sequence 5'-T[TG]NNGNAA[TG]-3' acting as an activator on distinct target genes. During early embryogenesis, plays essential and redundant functions with CEBPB. Essential for the transition from common myeloid progenitors (CMP) to granulocyte/monocyte progenitors (GMP). Critical for the proper development of the liver and the lung. Necessary for terminal adipocyte differentiation, is required for postnatal maintenance of systemic energy homeostasis and lipid storage. To regulate these different processes at the proper moment and tissue, interplays with other transcription factors and modulators. Down-regulates the expression of genes that maintain cells in an undifferentiated and proliferative state through E2F1 repression, which is critical for its ability to induce adipocyte and granulocyte terminal differentiation. Reciprocally E2F1 blocks adipocyte differentiation by binding to specific promoters and repressing CEBPA binding to its target gene promoters. Proliferation arrest also depends on a functional binding to SWI/SNF complex. In liver, regulates gluconeogenesis and lipogenesis through different mechanisms. To regulate gluconeogenesis, functionally cooperates with FOXO1 binding to IRE-controlled promoters and regulating the expression of target genes such as PCK1 or G6PC1. To modulate lipogenesis, interacts and transcriptionally synergizes with SREBF1 in promoter activation of specific lipogenic target genes such as ACAS2. In adipose tissue, seems to act as FOXO1 coactivator accessing to ADIPOQ promoter through FOXO1 binding sites. In terms of biological role, can act as dominant-negative. Binds DNA and have transctivation activity, even if much less efficiently than isoform 2. Does not inhibit cell proliferation. Directly and specifically enhances ribosomal DNA transcription interacting with RNA polymerase I-specific cofactors and inducing histone acetylation. This is CCAAT/enhancer-binding protein alpha from Homo sapiens (Human).